The chain runs to 177 residues: Large ribosomal subunit protein uL6 (177 aa).

It belongs to the universal ribosomal protein uL6 family. In terms of assembly, part of the 50S ribosomal subunit.

This protein binds to the 23S rRNA, and is important in its secondary structure. It is located near the subunit interface in the base of the L7/L12 stalk, and near the tRNA binding site of the peptidyltransferase center. The polypeptide is Large ribosomal subunit protein uL6 (Erythrobacter litoralis (strain HTCC2594)).